Consider the following 639-residue polypeptide: ADP-ribosylation factor-binding protein GGA1 (639 aa).

Residue M1 is modified to N-acetylmethionine. Residues 17 to 147 enclose the VHS domain; sequence ATNPLNKELD…MLKKQGIVKS (131 aa). The tract at residues 114–274 is interaction with ARF3; the sequence is KILELLYSWT…RLASDTEDND (161 aa). Positions 171–299 constitute a GAT domain; that stretch reads DEEKSKMLAR…VINLYKQLVR (129 aa). S185 bears the Phosphoserine mark. Positions 300–509 are unstructured hinge; that stretch reads GEEVNGDATA…ITVPLESIKP (210 aa). 2 disordered regions span residues 320–421 and 434–492; these read LDLS…SGLD and SLPP…QPVP. S355 carries the post-translational modification Phosphoserine; by CK2. An Autoinhibitory motif is present at residues 358–362; the sequence is DDELM. A compositionally biased stretch (polar residues) spans 381 to 390; that stretch reads GWNSFQSSDA. Position 418 is a phosphoserine (S418). Low complexity predominate over residues 462-480; that stretch reads SSSCSSPSSSATSLLHTVS. Pro residues predominate over residues 481 to 490; that stretch reads PEPPRPPQQP. In terms of domain architecture, GAE spans 510-631; that stretch reads SNILPVTVYD…NEMGDVDQFP (122 aa).

It belongs to the GGA protein family. As to quaternary structure, monomer. Interacts with GGA2 and GGA3. Binds to clathrin and activated ARFs, including ARF1, ARF5 and ARF6. Interacts with RABEP1. Interacts with RABGEF1. Interacts with the type-I membrane proteins LRP3, M6PR/CD-MPR and IGF2R/CI-MPR. Interacts (via N-terminal VHS domain) with SORL1/sorLA and SORT1 (via C-terminal cytosolic domain). Interacts with EPN4. Interacts with CCDC91. Interacts with HEATR5B/p200a. Interacts with SYNRG/gamma-synergin. Interacts (via GAE doamin) with NECAP1 and NECAP2. Interacts (via GAE domain) with AFTPH/aftiphilin. Interacts with TSG101 and UBC. Interacts with RNF11. Interacts (via VHS domain) with BACE1 (via DXXLL motif); the interaction highly increases when BACE1 is phosphorylated at 'Ser-498'. Interacts with CNST. Interacts with ADRA2B. Interacts with ARL3; the interaction recruits, in collaboration with RABEP1, PKD1:PKD2 complex to trans-Golgi network and is required for ciliary targeting. Post-translationally, phosphorylated by CK2 and dephosphorylated by PP2A. Phosphorylation of GGA1 allows the internal DXXLL motif to bind the VHS domain and to inhibit the recognition of cargo signals. In terms of processing, ubiquitinated. In terms of tissue distribution, ubiquitously expressed.

The protein resides in the golgi apparatus. Its subcellular location is the trans-Golgi network membrane. The protein localises to the endosome membrane. It is found in the early endosome membrane. Its function is as follows. Plays a role in protein sorting and trafficking between the trans-Golgi network (TGN) and endosomes. Mediates the ARF-dependent recruitment of clathrin to the TGN and binds ubiquitinated proteins and membrane cargo molecules with a cytosolic acidic cluster-dileucine (DXXLL) motif. Mediates export of the GPCR receptor ADRA2B to the cell surface. Required for targeting PKD1:PKD2 complex from the trans-Golgi network to the cilium membrane. Regulates retrograde transport of proteins such as phosphorylated form of BACE1 from endosomes to the trans-Golgi network. The chain is ADP-ribosylation factor-binding protein GGA1 (GGA1) from Homo sapiens (Human).